Reading from the N-terminus, the 275-residue chain is Polyamine aminopropyltransferase 1 (275 aa).

In terms of domain architecture, PABS spans 2-235 (ELWFTEKQTK…GLWTFTIGSK (234 aa)). Residue Gln31 coordinates S-methyl-5'-thioadenosine. Spermidine-binding residues include His62 and Asp86. S-methyl-5'-thioadenosine is bound by residues Glu106 and 137–138 (DG). Asp155 acts as the Proton acceptor in catalysis. Residue 155–158 (DSTE) coordinates spermidine. Pro162 lines the S-methyl-5'-thioadenosine pocket.

This sequence belongs to the spermidine/spermine synthase family. In terms of assembly, homodimer or homotetramer.

It localises to the cytoplasm. The catalysed reaction is S-adenosyl 3-(methylsulfanyl)propylamine + putrescine = S-methyl-5'-thioadenosine + spermidine + H(+). It functions in the pathway amine and polyamine biosynthesis; spermidine biosynthesis; spermidine from putrescine: step 1/1. In terms of biological role, catalyzes the irreversible transfer of a propylamine group from the amino donor S-adenosylmethioninamine (decarboxy-AdoMet) to putrescine (1,4-diaminobutane) to yield spermidine. The polypeptide is Polyamine aminopropyltransferase 1 (Bacillus cereus (strain ATCC 14579 / DSM 31 / CCUG 7414 / JCM 2152 / NBRC 15305 / NCIMB 9373 / NCTC 2599 / NRRL B-3711)).